The chain runs to 612 residues: Apoptosis-inducing factor 1, mitochondrial (612 aa).

2 consecutive short sequence motifs (mitochondrial localization signal) follow at residues 1–30 (MFRC…PKQR) and 62–88 (KMDN…KTIK). The N-terminal 54 residues, 1-54 (MFRCGGLAGAFKQKLVPLVRTVYVQRPKQRNRLPGNLFQQWRVPLELQMARQMA), are a transit peptide targeting the mitochondrion. A propeptide spans 55–101 (SSGSSGGKMDNSVLVLIVGLSTIGAGAYAYKTIKEDQKRYNERVMGL) (removed in mature form). N6-succinyllysine is present on lysine 108. The residue at position 115 (serine 115) is a Phosphoserine. The segment at 133 to 482 (FLLIGGGTAA…KPYWHQSMFW (350 aa)) is FAD-dependent oxidoreductase. Residues 137 to 141 (GGGTA), 163 to 164 (ED), arginine 171, and lysine 176 contribute to the FAD site. Residue tryptophan 195 participates in NAD(+) binding. An FAD-binding site is contributed by valine 232. Lysine 254 is covalently cross-linked (Glycyl lysine isopeptide (Lys-Gly) (interchain with G-Cter in ubiquitin)). The residue at position 267 (serine 267) is a Phosphoserine. Arginine 284 is an FAD binding site. Residues 307-310 (GGFL), glutamate 335, and lysine 341 contribute to the NAD(+) site. Serine 370 is modified (phosphoserine). Lysine 387 is subject to N6-acetyllysine. Glycine 398 is a binding site for NAD(+). Aspartate 437 contacts FAD. Positions 445 to 450 (KLGRRR) match the Nuclear localization signal motif. NAD(+) contacts are provided by residues 452 to 453 (EH), tryptophan 482, and glutamate 492. FAD contacts are provided by residues 453 to 454 (HH) and tryptophan 482. The segment covering 512–528 (AQDNPKSATEQSGTGIR) has biased composition (polar residues). The disordered stretch occupies residues 512-551 (AQDNPKSATEQSGTGIRSESETESEASEITIPPSAPAVPQ). Threonine 520 carries the phosphothreonine modification. A phosphoserine mark is found at serine 523 and serine 529. Residue asparagine 582 participates in NAD(+) binding. Lysine 592 bears the N6-acetyllysine mark.

Belongs to the FAD-dependent oxidoreductase family. Monomer (oxidized form). Homodimer (reduced form). Upon reduction with NADH, undergoes dimerization and forms tight, long-lived FADH2-NAD charge transfer complexes (CTC) resistant to oxidation. Also dimerizes with isoform 3 preventing its release from mitochondria. Interacts with XIAP/BIRC4. Interacts (via N-terminus) with EIF3G (via C-terminus). Interacts with PRELID1. Interacts with CHCHD4; the interaction increases in presence of NADH. Interacts with processed form of PARP1 (Poly [ADP-ribose] polymerase 1, processed C-terminus); interaction is mediated with poly-ADP-ribose chains attached to PARP1, promoting translocation into the nucleus. Requires FAD as cofactor. Under normal conditions, a 54-residue N-terminal segment is first proteolytically removed during or just after translocation into the mitochondrial intermembrane space (IMS) by the mitochondrial processing peptidase (MPP) to form the inner-membrane-anchored mature form (AIFmit). During apoptosis, it is further proteolytically processed at amino-acid position 101 leading to the generation of the mature form, which is confined to the mitochondrial IMS in a soluble form (AIFsol). AIFsol is released to the cytoplasm in response to specific death signals, and translocated to the nucleus, where it induces nuclear apoptosis in a caspase-independent manner. In terms of processing, ubiquitination by XIAP/BIRC4 does not lead to proteasomal degradation. Ubiquitination at Lys-254 by XIAP/BIRC4 blocks its ability to bind DNA and induce chromatin degradation, thereby inhibiting its ability to induce cell death. Expressed in cortical neurons (at protein level). As to expression, expressed in liver (at protein level).

The protein localises to the mitochondrion intermembrane space. The protein resides in the mitochondrion inner membrane. It localises to the cytoplasm. It is found in the nucleus. Its subcellular location is the perinuclear region. The protein localises to the mitochondrion. The protein resides in the cytosol. It catalyses the reaction A + NADH + H(+) = AH2 + NAD(+). In terms of biological role, functions both as NADH oxidoreductase and as regulator of apoptosis. In response to apoptotic stimuli, it is released from the mitochondrion intermembrane space into the cytosol and to the nucleus, where it functions as a proapoptotic factor in a caspase-independent pathway. Release into the cytoplasm is mediated upon binding to poly-ADP-ribose chains. The soluble form (AIFsol) found in the nucleus induces 'parthanatos' i.e. caspase-independent fragmentation of chromosomal DNA. Binds to DNA in a sequence-independent manner. Interacts with EIF3G, and thereby inhibits the EIF3 machinery and protein synthesis, and activates caspase-7 to amplify apoptosis. Plays a critical role in caspase-independent, pyknotic cell death in hydrogen peroxide-exposed cells. In contrast, participates in normal mitochondrial metabolism. Plays an important role in the regulation of respiratory chain biogenesis by interacting with CHCHD4 and controlling CHCHD4 mitochondrial import. This chain is Apoptosis-inducing factor 1, mitochondrial, found in Mus musculus (Mouse).